Here is a 79-residue protein sequence, read N- to C-terminus: Acyl carrier protein (79 aa).

In terms of domain architecture, Carrier spans 2–77 (SEVAEKVKKI…DAIDYIEKKK (76 aa)). S37 carries the post-translational modification O-(pantetheine 4'-phosphoryl)serine.

The protein belongs to the acyl carrier protein (ACP) family. 4'-phosphopantetheine is transferred from CoA to a specific serine of apo-ACP by AcpS. This modification is essential for activity because fatty acids are bound in thioester linkage to the sulfhydryl of the prosthetic group.

The protein resides in the cytoplasm. Its pathway is lipid metabolism; fatty acid biosynthesis. In terms of biological role, carrier of the growing fatty acid chain in fatty acid biosynthesis. The polypeptide is Acyl carrier protein (Acidiphilium cryptum (strain JF-5)).